The sequence spans 410 residues: Lissencephaly-1 homolog (410 aa).

In terms of domain architecture, LisH spans 7–39 (QQEELQLAVHAYLVEAGHAEAAAAMAKSANLGD). Residues 55–80 (TTITRLQKRNMELQAEVEELRSSARA) adopt a coiled-coil conformation. WD repeat units lie at residues 104-143 (GHRLPITAVAIHPSFAVMASASEDASIKLWDMESGNFERS), 146-185 (GHTNAVNDIAYDREGNRLVSCSTDMTIKVWNMDNFTCTKT), 188-227 (GHDHTVSSVRFDHTGDRVFSASRDKTIKIWELATGYCLQT), 230-269 (GHSDWVRSIDVSADGAWICSASSDHTVRVWSVASGECKHV), 294-333 (MIFGSKPSAEAASKGPFVASASRDKSICLFDVSTGQHLAR), 336-375 (GHDNWVRATAWSRGGRYLFSVADDKTMRVWDIATKRVSKT), and 378-410 (AHNHFVSCIAVHAKNTHVVTGSVDLKVKVWECN).

The protein belongs to the WD repeat LIS1/nudF family.

It localises to the cytoplasm. The protein localises to the cytoskeleton. It is found in the microtubule organizing center. The protein resides in the centrosome. In terms of biological role, positively regulates the activity of the minus-end directed microtubule motor protein dynein. May enhance dynein-mediated microtubule sliding by targeting dynein to the microtubule plus end. Required for several dynein- and microtubule-dependent processes. The sequence is that of Lissencephaly-1 homolog from Monosiga brevicollis (Choanoflagellate).